The chain runs to 370 residues: Ornithine carbamoyltransferase, mitochondrial (370 aa).

The N-terminal 38 residues, 1–38 (MPSPLRTAPQPPLRAFHNPPALRRLYSSTSHSAATPAT), are a transit peptide targeting the mitochondrion. Carbamoyl phosphate-binding positions include 97 to 100 (STRT), R148, H175, and Q178. Residues N216, D282, S286, and M287 each contribute to the L-ornithine site. Catalysis depends on C324, which acts as the Proton acceptor. Carbamoyl phosphate-binding positions include 324 to 325 (CL) and R351.

This sequence belongs to the aspartate/ornithine carbamoyltransferase superfamily. OTCase family. As to quaternary structure, homotrimer.

It localises to the mitochondrion matrix. It catalyses the reaction carbamoyl phosphate + L-ornithine = L-citrulline + phosphate + H(+). It functions in the pathway amino-acid biosynthesis; L-arginine biosynthesis; L-arginine from L-ornithine and carbamoyl phosphate: step 1/3. In Aspergillus niger, this protein is Ornithine carbamoyltransferase, mitochondrial (argB).